A 258-amino-acid chain; its full sequence is Imidazole glycerol phosphate synthase subunit HisF (258 aa).

Residues aspartate 11 and aspartate 130 contribute to the active site.

Belongs to the HisA/HisF family. Heterodimer of HisH and HisF.

It is found in the cytoplasm. The catalysed reaction is 5-[(5-phospho-1-deoxy-D-ribulos-1-ylimino)methylamino]-1-(5-phospho-beta-D-ribosyl)imidazole-4-carboxamide + L-glutamine = D-erythro-1-(imidazol-4-yl)glycerol 3-phosphate + 5-amino-1-(5-phospho-beta-D-ribosyl)imidazole-4-carboxamide + L-glutamate + H(+). Its pathway is amino-acid biosynthesis; L-histidine biosynthesis; L-histidine from 5-phospho-alpha-D-ribose 1-diphosphate: step 5/9. In terms of biological role, IGPS catalyzes the conversion of PRFAR and glutamine to IGP, AICAR and glutamate. The HisF subunit catalyzes the cyclization activity that produces IGP and AICAR from PRFAR using the ammonia provided by the HisH subunit. The polypeptide is Imidazole glycerol phosphate synthase subunit HisF (Rhodospirillum centenum (strain ATCC 51521 / SW)).